The primary structure comprises 372 residues: Ciliary neurotrophic factor receptor subunit alpha (372 aa).

Positions 1–22 (MAASVPWACCAVLAAAAAAVYT) are cleaved as a signal peptide. The Ig-like C2-type domain maps to 27–104 (PQEAPHVQYE…WHLRHQVLLH (78 aa)). Cys46 and Cys89 are oxidised to a cystine. Residues Asn60, Asn70, Asn142, Asn190, and Asn261 are each glycosylated (N-linked (GlcNAc...) asparagine). 2 Fibronectin type-III domains span residues 108–205 (PPRE…VKPD) and 206–306 (PPEN…TEEP). The short motif at 290 to 294 (WSDWS) is the WSXWS motif element. A disordered region spans residues 301–339 (PWTEEPRHLTTEAQAPETTTSTTSSLAPPPTTKICDPGE). Residues 311-326 (TEAQAPETTTSTTSSL) are compositionally biased toward low complexity. A lipid anchor (GPI-anchor amidated serine) is attached at Ser342. Residues 343–372 (GGGPSIPFLTSVPVTLVLAAAAATANNLLI) constitute a propeptide, removed in mature form.

Belongs to the type I cytokine receptor family. Type 3 subfamily. As to quaternary structure, forms a heterotrimer with LIFR and IL6ST. Interacts with heterodimeric neurotropic cytokine composed of CLCF1/CLC and CRLF1/CLF-1. Either alone or in complex with the heterodimer CLCF1-CRLF1 interacts with SORL1; this interaction may promote internalization and lysosomal degradation. In terms of tissue distribution, nervous system.

It is found in the cell membrane. Its function is as follows. Binds to CNTF. The alpha subunit provides the receptor specificity. The sequence is that of Ciliary neurotrophic factor receptor subunit alpha (Cntfr) from Rattus norvegicus (Rat).